The chain runs to 421 residues: D-amino acid dehydrogenase (421 aa).

3-17 (VLVLGGGVVGVASAY) contributes to the FAD binding site.

This sequence belongs to the DadA oxidoreductase family. The cofactor is FAD.

It carries out the reaction a D-alpha-amino acid + A + H2O = a 2-oxocarboxylate + AH2 + NH4(+). Its pathway is amino-acid degradation; D-alanine degradation; NH(3) and pyruvate from D-alanine: step 1/1. Its function is as follows. Oxidative deamination of D-amino acids. In Methylobacterium nodulans (strain LMG 21967 / CNCM I-2342 / ORS 2060), this protein is D-amino acid dehydrogenase.